The following is a 121-amino-acid chain: uncharacterized protein (121 aa).

The interval 101 to 121 (SIEPTATGSPETRDPDPSAYA) is disordered. Positions 111–121 (ETRDPDPSAYA) are enriched in basic and acidic residues.

It localises to the mitochondrion. This is an uncharacterized protein from Arabidopsis thaliana (Mouse-ear cress).